A 311-amino-acid chain; its full sequence is Probable manganese-dependent inorganic pyrophosphatase (311 aa).

Mn(2+) is bound by residues His9, Asp13, Asp15, Asp77, His99, and Asp151.

Belongs to the PPase class C family. It depends on Mn(2+) as a cofactor.

It localises to the cytoplasm. It catalyses the reaction diphosphate + H2O = 2 phosphate + H(+). The sequence is that of Probable manganese-dependent inorganic pyrophosphatase from Streptococcus pyogenes serotype M49 (strain NZ131).